The sequence spans 316 residues: BRCA2 and CDKN1A-interacting protein (316 aa).

Positions 1–57 (MASKAKKRAVGNGIQRPLGAPGQREEEEEEEDEVEDEEEDEDDSDEEEDEVDEIVDE) are disordered. Positions 25-57 (EEEEEEEDEVEDEEEDEDDSDEEEDEVDEIVDE) are enriched in acidic residues. Residues S44 and S114 each carry the phosphoserine modification. Residues 61 to 169 (IEFEAYSISD…EQSMVEQLDK (109 aa)) are interaction with BRCA2. An interaction with CDKN1A region spans residues 163–261 (MVEQLDKLLN…NAEEEFFYEK (99 aa)). S283 is modified (phosphoserine).

The protein belongs to the BCP1 family. As to quaternary structure, interacts with BRCA2, CDKN1A and MTDH/LYRIC. Interacts with DCTN1/p150-glued and ACTR1A/ARP1. Interacts with alpha-, beta- and gamma-tubulins. Interacts with TENT5C; the interaction has no effect on TENT5C poly(A) polymerase function. As to expression, expressed in the testes (at protein level).

It is found in the nucleus. The protein resides in the cytoplasm. The protein localises to the cytoskeleton. It localises to the microtubule organizing center. Its subcellular location is the centrosome. It is found in the centriole. The protein resides in the spindle pole. Its function is as follows. During interphase, required for microtubule organizing and anchoring activities. During mitosis, required for the organization and stabilization of the spindle pole. May promote cell cycle arrest by enhancing the inhibition of CDK2 activity by CDKN1A. May be required for repair of DNA damage by homologous recombination in conjunction with BRCA2. May not be involved in non-homologous end joining (NHEJ). The polypeptide is BRCA2 and CDKN1A-interacting protein (Bccip) (Mus musculus (Mouse)).